The following is a 72-amino-acid chain: Translation initiation factor IF-1 1 (72 aa).

One can recognise an S1-like domain in the interval 1-72 (MAKEDRIEMQ…SRARIIFRAK (72 aa)).

Belongs to the IF-1 family. In terms of assembly, component of the 30S ribosomal translation pre-initiation complex which assembles on the 30S ribosome in the order IF-2 and IF-3, IF-1 and N-formylmethionyl-tRNA(fMet); mRNA recruitment can occur at any time during PIC assembly.

The protein resides in the cytoplasm. In terms of biological role, one of the essential components for the initiation of protein synthesis. Stabilizes the binding of IF-2 and IF-3 on the 30S subunit to which N-formylmethionyl-tRNA(fMet) subsequently binds. Helps modulate mRNA selection, yielding the 30S pre-initiation complex (PIC). Upon addition of the 50S ribosomal subunit IF-1, IF-2 and IF-3 are released leaving the mature 70S translation initiation complex. This is Translation initiation factor IF-1 1 from Methylobacillus flagellatus (strain ATCC 51484 / DSM 6875 / VKM B-1610 / KT).